Reading from the N-terminus, the 348-residue chain is tRNA-specific 2-thiouridylase MnmA (348 aa).

ATP is bound by residues 8–15 and Met34; that span reads LLSGGVDS. Catalysis depends on Cys105, which acts as the Nucleophile. Cys105 and Cys197 are oxidised to a cystine. Gly129 serves as a coordination point for ATP. The tract at residues 147 to 149 is interaction with tRNA; sequence KDQ. Catalysis depends on Cys197, which acts as the Cysteine persulfide intermediate.

The protein belongs to the MnmA/TRMU family.

Its subcellular location is the cytoplasm. It catalyses the reaction S-sulfanyl-L-cysteinyl-[protein] + uridine(34) in tRNA + AH2 + ATP = 2-thiouridine(34) in tRNA + L-cysteinyl-[protein] + A + AMP + diphosphate + H(+). Functionally, catalyzes the 2-thiolation of uridine at the wobble position (U34) of tRNA, leading to the formation of s(2)U34. This is tRNA-specific 2-thiouridylase MnmA from Fervidobacterium nodosum (strain ATCC 35602 / DSM 5306 / Rt17-B1).